The following is a 187-amino-acid chain: Elongation factor P (187 aa).

The protein belongs to the elongation factor P family.

Its subcellular location is the cytoplasm. It participates in protein biosynthesis; polypeptide chain elongation. Its function is as follows. Involved in peptide bond synthesis. Stimulates efficient translation and peptide-bond synthesis on native or reconstituted 70S ribosomes in vitro. Probably functions indirectly by altering the affinity of the ribosome for aminoacyl-tRNA, thus increasing their reactivity as acceptors for peptidyl transferase. The sequence is that of Elongation factor P from Desulforapulum autotrophicum (strain ATCC 43914 / DSM 3382 / VKM B-1955 / HRM2) (Desulfobacterium autotrophicum).